Reading from the N-terminus, the 486-residue chain is MTTFYTVMSWLLVFGYWLLIAGVTLRILMKRRAVPSAMAWLLIIYILPLVGIIAYLSLGELHLGKRRAERARTMWPSTARWLNDLKSSHHIFAKENSDVAQALFQLCEKRQGIAGVKGNQLQLLTSTDETLSTLVRDIELARHNIEMVFYIWQPGGHADDVAEALMAAARRGVHCRLLLDSAGSVTFFRSPWPAMMRNAGVDVVEALRVSLLRVFLRRMDLRQHRKVVLIDNYIAYTGSMNLVDPRFFKQNAGVGQWVDLMARMEGPVATTMGIIYSCDWEIETGRRILPPPPDDNVMPFEQESGHTIQVIASGPGFPEDMIHQALLTAVYSAREQLIMTTPYLVPSDDLLHAICTAAYRGVEVSIIVPRHIDSMLVRWASRAFFGELLAAGVKIYQFEGGLLHSKSILVDGQLSLVGTVNLDMRSLWLNFEITLVIDDDGFGSDLARVQEDYIARSRLVDAKRWAHRAYWQRIVERLFYFFSPLL.

The next 2 helical transmembrane spans lie at 3-23 (TFYT…IAGV) and 38-58 (MAWL…YLSL). PLD phosphodiesterase domains follow at residues 219 to 246 (MDLR…VDPR) and 399 to 426 (EGGL…DMRS). Active-site residues include His-224, Lys-226, Asp-231, His-404, Lys-406, and Asp-411.

This sequence belongs to the phospholipase D family. Cardiolipin synthase subfamily. ClsA sub-subfamily.

The protein localises to the cell inner membrane. It carries out the reaction 2 a 1,2-diacyl-sn-glycero-3-phospho-(1'-sn-glycerol) = a cardiolipin + glycerol. Functionally, catalyzes the reversible phosphatidyl group transfer from one phosphatidylglycerol molecule to another to form cardiolipin (CL) (diphosphatidylglycerol) and glycerol. The protein is Cardiolipin synthase A of Erwinia tasmaniensis (strain DSM 17950 / CFBP 7177 / CIP 109463 / NCPPB 4357 / Et1/99).